The primary structure comprises 563 residues: Inositol-3-phosphate synthase 1-A (563 aa).

The protein belongs to the myo-inositol 1-phosphate synthase family. It depends on NAD(+) as a cofactor.

It is found in the cytoplasm. The catalysed reaction is D-glucose 6-phosphate = 1D-myo-inositol 3-phosphate. Its pathway is polyol metabolism; myo-inositol biosynthesis; myo-inositol from D-glucose 6-phosphate: step 1/2. Functionally, key enzyme in myo-inositol biosynthesis pathway that catalyzes the conversion of glucose 6-phosphate to 1-myo-inositol 1-phosphate in a NAD-dependent manner. Rate-limiting enzyme in the synthesis of all inositol-containing compounds. This Xenopus laevis (African clawed frog) protein is Inositol-3-phosphate synthase 1-A (isyna1-a).